We begin with the raw amino-acid sequence, 144 residues long: L-fucose mutarotase (144 aa).

Residue His22 is the Proton donor of the active site. Residues Asp30, Arg109, and 131 to 133 each bind substrate; that span reads YGN.

Belongs to the RbsD / FucU family. FucU mutarotase subfamily. Homodecamer.

It localises to the cytoplasm. It carries out the reaction alpha-L-fucose = beta-L-fucose. It participates in carbohydrate metabolism; L-fucose metabolism. In terms of biological role, involved in the anomeric conversion of L-fucose. The sequence is that of L-fucose mutarotase from Histophilus somni (strain 129Pt) (Haemophilus somnus).